Here is a 342-residue protein sequence, read N- to C-terminus: Ferredoxin--NADP reductase (342 aa).

FAD-binding residues include C17, D36, Q44, Y49, I89, F124, D289, and T330.

Belongs to the ferredoxin--NADP reductase type 2 family. As to quaternary structure, homodimer. FAD is required as a cofactor.

It carries out the reaction 2 reduced [2Fe-2S]-[ferredoxin] + NADP(+) + H(+) = 2 oxidized [2Fe-2S]-[ferredoxin] + NADPH. The protein is Ferredoxin--NADP reductase of Rhodopseudomonas palustris (strain BisB5).